A 90-amino-acid polypeptide reads, in one-letter code: Essential MCU regulator, mitochondrial (90 aa).

A helical membrane pass occupies residues 49-68; that stretch reads GVLKLIFVSASSLYIGGLIA.

This sequence belongs to the SMDT1/EMRE family.

Its subcellular location is the mitochondrion inner membrane. Its function is as follows. Essential regulatory subunit of the mitochondrial calcium uniporter (mcu-1) channel, a protein that mediates calcium uptake into mitochondria. This chain is Essential MCU regulator, mitochondrial, found in Caenorhabditis elegans.